A 168-amino-acid chain; its full sequence is Transmembrane protein 229b (168 aa).

Residues 1-14 (MAPPEPLTALSRWY) lie on the Cytoplasmic side of the membrane. Residues 15 to 35 (LYAIHGYFCEVMFTAAWDFVV) traverse the membrane as a helical segment. At 36–40 (NYNWK) the chain is on the extracellular side. The helical transmembrane segment at 41 to 61 (FPGVTSVWALFIYGTSILIVE) threads the bilayer. Residues 62 to 72 (KMYLYLKDKCN) are Cytoplasmic-facing. A helical transmembrane segment spans residues 73 to 93 (ILIRCLIYTLWTYIWEFSTGL). At 94 to 109 (ILRQFNACPWDYSQFD) the chain is on the extracellular side. The chain crosses the membrane as a helical span at residues 110–130 (FDFMGLITLEYAIPWFCASFI). Residues 131-168 (MEQLVIRNTLRLRFDEHAEPGSPVMSTVSMANGHVKCN) are Cytoplasmic-facing.

The protein belongs to the TMEM229 family.

It is found in the membrane. The polypeptide is Transmembrane protein 229b (tmem229b) (Xenopus tropicalis (Western clawed frog)).